We begin with the raw amino-acid sequence, 441 residues long: Protein kinase C and casein kinase substrate in neurons protein 1 (441 aa).

Phosphoserine is present on residues Ser-2 and Ser-76. The 271-residue stretch at 10 to 280 (EEITDSFWEV…AIRGADAQED (271 aa)) folds into the F-BAR domain. Residues 23–272 (KRTVKRIDDG…HVYRELEQAI (250 aa)) adopt a coiled-coil conformation. The residue at position 181 (Thr-181) is a Phosphothreonine. Residues 310 to 380 (AAKKEKQPKK…ANGGANPFED (71 aa)) are disordered. Basic and acidic residues predominate over residues 311 to 321 (AKKEKQPKKAE). The span at 326–348 (SNATGAVESTSQAGDRGSVSSYD) shows a compositional bias: polar residues. Residues Ser-343, Ser-345, Ser-346, Ser-358, and Ser-362 each carry the phosphoserine modification. The SH3 domain occupies 382 to 441 (AKGVRVRALYDYDGQEQDELSFKAGDELTKLGEEDEQGWCRGRLDSGQLGLYPANYVEAI). Tyr-391 bears the Phosphotyrosine mark. Phosphoserine occurs at positions 402 and 427.

Belongs to the PACSIN family. In terms of assembly, homodimer. May form heterooligomers with other PACSINs. Interacts with MAPT. Interacts with TRPV4. Interacts (via SH3 domain) with SYNJ1 and WASL. Interacts (via SH3 domain) with DNM1; the interaction is reduced by DNM1 phosphorylation. Interacts with DNM2 and DNM3. Interacts with both COBL and DBNL. Identified in a complex composed of COBL, PACSIN1 and WASL. Interacts with EHD1 and EHD3. In terms of processing, phosphorylated by casein kinase 2 (CK2) and protein kinase C (PKC). In terms of tissue distribution, highly expressed in brain (at protein level).

Its subcellular location is the cytoplasm. It is found in the cell projection. The protein localises to the synapse. The protein resides in the synaptosome. It localises to the ruffle membrane. Its subcellular location is the membrane. It is found in the cytoplasmic vesicle membrane. The protein localises to the cytosol. The protein resides in the cell membrane. Functionally, binds to membranes via its F-BAR domain and mediates membrane tubulation. Plays a role in the reorganization of the microtubule cytoskeleton via its interaction with MAPT; this decreases microtubule stability and inhibits MAPT-induced microtubule polymerization. Plays a role in cellular transport processes by recruiting DNM1, DNM2 and DNM3 to membranes. Plays a role in the reorganization of the actin cytoskeleton and in neuron morphogenesis via its interaction with COBL and WASL, and by recruiting COBL to the cell cortex. Plays a role in the regulation of neurite formation, neurite branching and the regulation of neurite length. Required for normal synaptic vesicle endocytosis; this process retrieves previously released neurotransmitters to accommodate multiple cycles of neurotransmission. Required for normal excitatory and inhibitory synaptic transmission. The polypeptide is Protein kinase C and casein kinase substrate in neurons protein 1 (Pacsin1) (Rattus norvegicus (Rat)).